Reading from the N-terminus, the 94-residue chain is Protein EGG APPARATUS-1 (94 aa).

Residues 1 to 15 (MSSCPAIVNMKDDDG) lie on the Cytoplasmic side of the membrane. A helical; Signal-anchor for type II membrane protein transmembrane segment spans residues 16–36 (IGAMGAAVAFAAMGVFGIYFL). Residues 37–94 (WPVVGPTSAGMMMKAPGAAGWVICRAVFEANPQLYFTILRTAGAAAAAATFAACSIAS) lie on the Extracellular side of the membrane.

In terms of processing, possible proteolysis of the C-terminal region from the predicted transmembrane domain to permit secretion and transport of the mature protein to the cell walls of the nucellus, allowing the spreading from the egg cell apparatus to the micropylar opening of the ovule. As to expression, expressed only in the egg apparatus, consisting of the egg cell and two synergids. Not detected in the central cell, antipodals, and nucellar and integumental cells.

Its subcellular location is the membrane. Involved in short-range signaling required for pollen tube attraction by the female gametophyte. Required for female fertility. The polypeptide is Protein EGG APPARATUS-1 (Ea1) (Zea mays (Maize)).